The sequence spans 618 residues: Leucine aminopeptidase 2 (618 aa).

Residues 140 to 142 (QCQ) and 272 to 277 (PYGGME) contribute to the a peptide site. His-301 is a binding site for Zn(2+). Glu-302 acts as the Proton acceptor in catalysis. Positions 305 and 324 each coordinate Zn(2+). Tyr-389 (proton donor) is an active-site residue.

Belongs to the peptidase M1 family. Zn(2+) serves as cofactor.

It localises to the cytoplasm. It is found in the nucleus. The catalysed reaction is an epoxide + H2O = an ethanediol. Aminopeptidase that preferentially cleaves di- and tripeptides. Also has low epoxide hydrolase activity (in vitro). Can hydrolyze the epoxide leukotriene LTA(4) but it forms preferentially 5,6-dihydroxy-7,9,11,14-eicosatetraenoic acid rather than the cytokine leukotriene B(4) as the product compared to the homologous mammalian enzyme (in vitro). The chain is Leucine aminopeptidase 2 from Emericella nidulans (strain FGSC A4 / ATCC 38163 / CBS 112.46 / NRRL 194 / M139) (Aspergillus nidulans).